The following is a 226-amino-acid chain: 2-C-methyl-D-erythritol 4-phosphate cytidylyltransferase (226 aa).

It belongs to the IspD/TarI cytidylyltransferase family. IspD subfamily.

It catalyses the reaction 2-C-methyl-D-erythritol 4-phosphate + CTP + H(+) = 4-CDP-2-C-methyl-D-erythritol + diphosphate. Its pathway is isoprenoid biosynthesis; isopentenyl diphosphate biosynthesis via DXP pathway; isopentenyl diphosphate from 1-deoxy-D-xylulose 5-phosphate: step 2/6. In terms of biological role, catalyzes the formation of 4-diphosphocytidyl-2-C-methyl-D-erythritol from CTP and 2-C-methyl-D-erythritol 4-phosphate (MEP). In Rhodococcus jostii (strain RHA1), this protein is 2-C-methyl-D-erythritol 4-phosphate cytidylyltransferase.